Reading from the N-terminus, the 136-residue chain is Large ribosomal subunit protein uL16 (136 aa).

Belongs to the universal ribosomal protein uL16 family. In terms of assembly, part of the 50S ribosomal subunit.

Binds 23S rRNA and is also seen to make contacts with the A and possibly P site tRNAs. This Citrobacter koseri (strain ATCC BAA-895 / CDC 4225-83 / SGSC4696) protein is Large ribosomal subunit protein uL16.